We begin with the raw amino-acid sequence, 170 residues long: Flavodoxin (170 aa).

One can recognise a Flavodoxin-like domain in the interval 4–165 (IGLFYGTQTG…RVKTWVSEIK (162 aa)).

It belongs to the flavodoxin family. The cofactor is FMN.

Functionally, low-potential electron donor to a number of redox enzymes. This chain is Flavodoxin (isiB), found in Synechocystis sp. (strain ATCC 27184 / PCC 6803 / Kazusa).